Reading from the N-terminus, the 296-residue chain is Protoheme IX farnesyltransferase (296 aa).

At 1 to 9 (MIFKQYLQV) the chain is on the cytoplasmic side. The helical transmembrane segment at 10–28 (TKPGIIFGNLISVIGGFLL) threads the bilayer. Residues 29–37 (ASKGSIDYP) are Periplasmic-facing. A helical membrane pass occupies residues 38–56 (LFIYTLVGVSLVVASGCVF). Residues 57 to 78 (NNYIDRDIDRKMERTKNRVLVK) are Cytoplasmic-facing. Residues 79–97 (GLISPAVSLVYATLLGIAG) form a helical membrane-spanning segment. Residues 98–107 (FMLLWFGANP) are Periplasmic-facing. The helical transmembrane segment at 108–126 (LACWLGVMGFVVYVGVYSL) threads the bilayer. Topologically, residues 127–197 (YMKRHSVYGT…YQAANIPVLP (71 aa)) are cytoplasmic. A helical transmembrane segment spans residues 198–216 (VVKGISVAKNHITLYIIAF). At 217–228 (AVATLMLSLGGY) the chain is on the periplasmic side. A helical membrane pass occupies residues 229-247 (AGYKYLVVAAAVSVWWLGM). The Cytoplasmic portion of the chain corresponds to 248–268 (ALRGYKVADDRIWARKLFGFS). Residues 269–287 (IIAITALSVMMSVDFMVPD) traverse the membrane as a helical segment. Over 288-296 (SHTLLAAVW) the chain is Periplasmic.

The protein belongs to the UbiA prenyltransferase family. Protoheme IX farnesyltransferase subfamily.

It is found in the cell inner membrane. The enzyme catalyses heme b + (2E,6E)-farnesyl diphosphate + H2O = Fe(II)-heme o + diphosphate. It participates in porphyrin-containing compound metabolism; heme O biosynthesis; heme O from protoheme: step 1/1. Functionally, converts heme B (protoheme IX) to heme O by substitution of the vinyl group on carbon 2 of heme B porphyrin ring with a hydroxyethyl farnesyl side group. The polypeptide is Protoheme IX farnesyltransferase (Escherichia coli O1:K1 / APEC).